Consider the following 103-residue polypeptide: Large ribosomal subunit protein bL21 (103 aa).

This sequence belongs to the bacterial ribosomal protein bL21 family. In terms of assembly, part of the 50S ribosomal subunit. Contacts protein L20.

In terms of biological role, this protein binds to 23S rRNA in the presence of protein L20. The protein is Large ribosomal subunit protein bL21 of Chromobacterium violaceum (strain ATCC 12472 / DSM 30191 / JCM 1249 / CCUG 213 / NBRC 12614 / NCIMB 9131 / NCTC 9757 / MK).